The following is a 447-amino-acid chain: N-succinylarginine dihydrolase (447 aa).

Residues 19 to 28 (AGLSFGNEAS), asparagine 110, and 137 to 138 (HR) contribute to the substrate site. Glutamate 174 is an active-site residue. Arginine 212 is a binding site for substrate. Residue histidine 248 is part of the active site. Substrate is bound by residues aspartate 250 and asparagine 359. The active-site Nucleophile is cysteine 365.

This sequence belongs to the succinylarginine dihydrolase family. As to quaternary structure, homodimer.

It catalyses the reaction N(2)-succinyl-L-arginine + 2 H2O + 2 H(+) = N(2)-succinyl-L-ornithine + 2 NH4(+) + CO2. It functions in the pathway amino-acid degradation; L-arginine degradation via AST pathway; L-glutamate and succinate from L-arginine: step 2/5. Functionally, catalyzes the hydrolysis of N(2)-succinylarginine into N(2)-succinylornithine, ammonia and CO(2). In Escherichia coli O9:H4 (strain HS), this protein is N-succinylarginine dihydrolase.